A 628-amino-acid chain; its full sequence is Probable potassium transport system protein Kup (628 aa).

The next 12 membrane-spanning stretches (helical) occupy residues 15 to 35 (LAIAAIGVVFGDIGTSPLYSL), 55 to 75 (VISLLFWAIVIVVGVKYVLFV), 104 to 124 (AGLLMMLGIFGACMFYGDAVI), 142 to 162 (PHLSHLVLPLTIVILILLFWI), 173 to 193 (LFGPIMVLWFVVLAALGLWHI), 210 to 230 (TFMAAHVLQAYVVLGSVVLVL), 252 to 272 (WYVLVMPSLVLNYFGQGALLM), 281 to 301 (PFFLLAPDWALLPLVVLSTIA), 342 to 362 (IYVPVVNWMLLFIILCIVIAF), 372 to 392 (YGIAVTATMVITTILACVVMV), 400 to 420 (LLVALIIGVFMTVDLGFFGAN), and 426 to 446 (EGGWLPLGIGALLFFLLMTWY).

It belongs to the HAK/KUP transporter (TC 2.A.72) family.

It localises to the cell inner membrane. The catalysed reaction is K(+)(in) + H(+)(in) = K(+)(out) + H(+)(out). Transport of potassium into the cell. Likely operates as a K(+):H(+) symporter. The polypeptide is Probable potassium transport system protein Kup (Paraburkholderia xenovorans (strain LB400)).